A 62-amino-acid polypeptide reads, in one-letter code: Large ribosomal subunit protein uL29 (62 aa).

The protein belongs to the universal ribosomal protein uL29 family.

This Acholeplasma laidlawii (strain PG-8A) protein is Large ribosomal subunit protein uL29.